A 111-amino-acid chain; its full sequence is T cell receptor beta variable 30 (111 aa).

The N-terminal stretch at 1 to 18 (MLCSLLALLLGTFFGVRS) is a signal peptide. The Ig-like domain maps to 19–111 (QTIHQWPATL…DSGFYLCAWS (93 aa)). A disulfide bridge connects residues Cys-40 and Cys-108. Residue Asn-80 is glycosylated (N-linked (GlcNAc...) asparagine).

As to quaternary structure, alpha-beta TR is a heterodimer composed of an alpha and beta chain; disulfide-linked. The alpha-beta TR is associated with the transmembrane signaling CD3 coreceptor proteins to form the TR-CD3 (TcR or TCR). The assembly of alpha-beta TR heterodimers with CD3 occurs in the endoplasmic reticulum where a single alpha-beta TR heterodimer associates with one CD3D-CD3E heterodimer, one CD3G-CD3E heterodimer and one CD247 homodimer forming a stable octameric structure. CD3D-CD3E and CD3G-CD3E heterodimers preferentially associate with TR alpha and TR beta chains, respectively. The association of the CD247 homodimer is the last step of TcR assembly in the endoplasmic reticulum and is required for transport to the cell surface.

It localises to the cell membrane. V region of the variable domain of T cell receptor (TR) beta chain that participates in the antigen recognition. Alpha-beta T cell receptors are antigen specific receptors which are essential to the immune response and are present on the cell surface of T lymphocytes. Recognize peptide-major histocompatibility (MH) (pMH) complexes that are displayed by antigen presenting cells (APC), a prerequisite for efficient T cell adaptive immunity against pathogens. Binding of alpha-beta TR to pMH complex initiates TR-CD3 clustering on the cell surface and intracellular activation of LCK that phosphorylates the ITAM motifs of CD3G, CD3D, CD3E and CD247 enabling the recruitment of ZAP70. In turn ZAP70 phosphorylates LAT, which recruits numerous signaling molecules to form the LAT signalosome. The LAT signalosome propagates signal branching to three major signaling pathways, the calcium, the mitogen-activated protein kinase (MAPK) kinase and the nuclear factor NF-kappa-B (NF-kB) pathways, leading to the mobilization of transcription factors that are critical for gene expression and essential for T cell growth and differentiation. The T cell repertoire is generated in the thymus, by V-(D)-J rearrangement. This repertoire is then shaped by intrathymic selection events to generate a peripheral T cell pool of self-MH restricted, non-autoaggressive T cells. Post-thymic interaction of alpha-beta TR with the pMH complexes shapes TR structural and functional avidity. This Homo sapiens (Human) protein is T cell receptor beta variable 30.